Consider the following 256-residue polypeptide: DNA repair protein RecO (256 aa).

This sequence belongs to the RecO family.

Involved in DNA repair and RecF pathway recombination. The chain is DNA repair protein RecO from Rhizobium etli (strain ATCC 51251 / DSM 11541 / JCM 21823 / NBRC 15573 / CFN 42).